Reading from the N-terminus, the 177-residue chain is ATP synthase subunit delta (177 aa).

The protein belongs to the ATPase delta chain family. As to quaternary structure, F-type ATPases have 2 components, F(1) - the catalytic core - and F(0) - the membrane proton channel. F(1) has five subunits: alpha(3), beta(3), gamma(1), delta(1), epsilon(1). F(0) has three main subunits: a(1), b(2) and c(10-14). The alpha and beta chains form an alternating ring which encloses part of the gamma chain. F(1) is attached to F(0) by a central stalk formed by the gamma and epsilon chains, while a peripheral stalk is formed by the delta and b chains.

The protein localises to the cell inner membrane. Functionally, f(1)F(0) ATP synthase produces ATP from ADP in the presence of a proton or sodium gradient. F-type ATPases consist of two structural domains, F(1) containing the extramembraneous catalytic core and F(0) containing the membrane proton channel, linked together by a central stalk and a peripheral stalk. During catalysis, ATP synthesis in the catalytic domain of F(1) is coupled via a rotary mechanism of the central stalk subunits to proton translocation. This protein is part of the stalk that links CF(0) to CF(1). It either transmits conformational changes from CF(0) to CF(1) or is implicated in proton conduction. The polypeptide is ATP synthase subunit delta (Serratia proteamaculans (strain 568)).